A 579-amino-acid polypeptide reads, in one-letter code: Peptidoglycan D,D-transpeptidase FtsI (579 aa).

Residues 15–35 (FCVIVGLLLAMVGAIVWRIVD) traverse the membrane as a helical segment. Serine 294 functions as the Acyl-ester intermediate in the catalytic mechanism. The segment at 558–579 (DNLPTATEQQQVNAAPAKGGRG) is disordered. Over residues 561–570 (PTATEQQQVN) the composition is skewed to polar residues.

It belongs to the transpeptidase family. FtsI subfamily.

The protein localises to the cell inner membrane. It carries out the reaction Preferential cleavage: (Ac)2-L-Lys-D-Ala-|-D-Ala. Also transpeptidation of peptidyl-alanyl moieties that are N-acyl substituents of D-alanine.. It functions in the pathway cell wall biogenesis; peptidoglycan biosynthesis. Catalyzes cross-linking of the peptidoglycan cell wall at the division septum. Binds penicillin. The polypeptide is Peptidoglycan D,D-transpeptidase FtsI (Pseudomonas aeruginosa (strain ATCC 15692 / DSM 22644 / CIP 104116 / JCM 14847 / LMG 12228 / 1C / PRS 101 / PAO1)).